We begin with the raw amino-acid sequence, 1780 residues long: Chitin synthase Vb (1780 aa).

Residues asparagine 133, asparagine 153, asparagine 629, asparagine 644, asparagine 655, and asparagine 660 are each glycosylated (N-linked (GlcNAc...) asparagine). 2 helical membrane-spanning segments follow: residues 740 to 760 and 776 to 796; these read AWIA…LKFI and FVLF…IIGF. A Cytochrome b5 heme-binding domain is found at 805–866; the sequence is NKAWNVKEVA…LSGMVMDNYF (62 aa). 2 N-linked (GlcNAc...) asparagine glycosylation sites follow: asparagine 888 and asparagine 1009. The chain crosses the membrane as a helical span at residues 1046–1066; sequence LLLAFAIIICIVTAVKFLAAL. N-linked (GlcNAc...) asparagine glycosylation occurs at asparagine 1411. The next 3 membrane-spanning stretches (helical) occupy residues 1442 to 1462, 1469 to 1489, and 1497 to 1517; these read LCGT…IYIL, IPYI…LIFI, and IGWM…LPLY. Asparagine 1524 carries an N-linked (GlcNAc...) asparagine glycan. The tract at residues 1649–1691 is disordered; sequence TGVHDMRSQSPYQDYPGQHPSVSNLRGQANLSPATGGGHSRSG. The span at 1668–1681 shows a compositional bias: polar residues; the sequence is PSVSNLRGQANLSP. Positions 1722–1778 constitute a DEK-C domain; the sequence is GPNDMAIVESIRSVLCEVDLDTVTKKQVRALVEQRLQTELVGERRTFMDRQIDHELE.

Belongs to the chitin synthase family. Class VII subfamily.

The protein resides in the cell membrane. It carries out the reaction [(1-&gt;4)-N-acetyl-beta-D-glucosaminyl](n) + UDP-N-acetyl-alpha-D-glucosamine = [(1-&gt;4)-N-acetyl-beta-D-glucosaminyl](n+1) + UDP + H(+). Its function is as follows. Polymerizes chitin, a structural polymer of the cell wall and septum, by transferring the sugar moiety of UDP-GlcNAc to the non-reducing end of the growing chitin polymer. ChsV and chsVb do perform additive, but not redundant, functions in septum formation. Functions not only in the maintenance of cell wall integrity under different osmotic conditions but also in polarized cell wall synthesis. Plays an important role in the complex infection process of this fungus. In Fusarium oxysporum f. sp. lycopersici (strain 4287 / CBS 123668 / FGSC 9935 / NRRL 34936) (Fusarium vascular wilt of tomato), this protein is Chitin synthase Vb.